Consider the following 432-residue polypeptide: Gamma-glutamyl phosphate reductase (432 aa).

Belongs to the gamma-glutamyl phosphate reductase family.

Its subcellular location is the cytoplasm. The enzyme catalyses L-glutamate 5-semialdehyde + phosphate + NADP(+) = L-glutamyl 5-phosphate + NADPH + H(+). It functions in the pathway amino-acid biosynthesis; L-proline biosynthesis; L-glutamate 5-semialdehyde from L-glutamate: step 2/2. In terms of biological role, catalyzes the NADPH-dependent reduction of L-glutamate 5-phosphate into L-glutamate 5-semialdehyde and phosphate. The product spontaneously undergoes cyclization to form 1-pyrroline-5-carboxylate. In Methylorubrum extorquens (strain PA1) (Methylobacterium extorquens), this protein is Gamma-glutamyl phosphate reductase.